Here is a 129-residue protein sequence, read N- to C-terminus: MIVGMGTDIVAVERMARLHARFGERLTERLLGPLEVADMPVEAAAGAAFLARRFAAKEATFKALGSGMTNGMRWMDVQVGHDSGGRPQLVLGGRAQQLLRGLGDGVRSWLSISDERRYAMAVVVLERGG.

D8 and E58 together coordinate Mg(2+).

This sequence belongs to the P-Pant transferase superfamily. AcpS family. Mg(2+) serves as cofactor.

It is found in the cytoplasm. The enzyme catalyses apo-[ACP] + CoA = holo-[ACP] + adenosine 3',5'-bisphosphate + H(+). Functionally, transfers the 4'-phosphopantetheine moiety from coenzyme A to a Ser of acyl-carrier-protein. The protein is Holo-[acyl-carrier-protein] synthase of Acidithiobacillus ferrooxidans (strain ATCC 53993 / BNL-5-31) (Leptospirillum ferrooxidans (ATCC 53993)).